We begin with the raw amino-acid sequence, 217 residues long: Small ribosomal subunit protein uS5 (217 aa).

Residues 49-112 enclose the S5 DRBM domain; it reads LEEKVLDVKL…AQAKKNIIRV (64 aa).

It belongs to the universal ribosomal protein uS5 family. In terms of assembly, part of the 30S ribosomal subunit. Contacts protein S4.

In terms of biological role, with S4 and S12 plays an important role in translational accuracy. The polypeptide is Small ribosomal subunit protein uS5 (Methanocaldococcus jannaschii (strain ATCC 43067 / DSM 2661 / JAL-1 / JCM 10045 / NBRC 100440) (Methanococcus jannaschii)).